Consider the following 714-residue polypeptide: G protein-coupled receptor kinase 2 (714 aa).

The interval 1–308 is N-terminal; sequence MELENIVANT…LEAQPITYKT (308 aa). 2 consecutive RGS domains span residues 53–174 and 177–294; these read YGYV…SQHS and INHK…HRYL. The interval 141–229 is disordered; the sequence is SNANPTETAE…GGGEGGGGGK (89 aa). A compositionally biased stretch (low complexity) spans 154–175; sequence CNNTTANNCNNINNSNNSQHSS. Composition is skewed to basic and acidic residues over residues 176-190 and 199-220; these read DINHKKLDTRNHNGD and HQDDGDESVKCQEGHDDAEKGG. Residues 309 to 574 form the Protein kinase domain; it reads FRMYRVLGKG…GQDVMAHPFF (266 aa). ATP-binding positions include 315–323 and Lys-338; that span reads LGKGGFGEV. The active-site Proton acceptor is Asp-435. In terms of domain architecture, AGC-kinase C-terminal spans 577 to 642; the sequence is TQLNWRRLEA…GSVSISWQNE (66 aa). A Phosphoserine modification is found at Ser-612. Thr-613 is subject to Phosphothreonine. The interval 667–714 is disordered; the sequence is INAAPEPDKAGCFPFRRKKKQPARTQPIPIPEHLLTTSHSVSSTTVES. Positions 698–714 are enriched in low complexity; the sequence is EHLLTTSHSVSSTTVES.

Belongs to the protein kinase superfamily. AGC Ser/Thr protein kinase family. GPRK subfamily. As to expression, expressed in all larval tissues and in adult ovaries. Larval CNS staining is localized to axons projecting to the optic lobes and the mushroom bodies, in the longitudinal connectives, and in cell bodies and nerves of the ring gland corpus allatum. Adult CNS staining is detectable only in cell bodies and processes associated with the ellipsoid body of the central complex and portions of the mushroom bodies. In the wing disk, expression is confined to a stripe that parallels the anterior/posterior boundary of the wing blade and the hinge region, and weak expression in the prospective notum.

It is found in the membrane. The enzyme catalyses [G-protein-coupled receptor] + ATP = [G-protein-coupled receptor]-phosphate + ADP + H(+). Specifically phosphorylates the activated forms of G protein-coupled receptors. Required during oogenesis and embryogenesis; component of a signaling pathway that functions during egg chamber maturation. The polypeptide is G protein-coupled receptor kinase 2 (Gprk2) (Drosophila melanogaster (Fruit fly)).